The following is a 110-amino-acid chain: UPF0060 membrane protein RSp1275 (110 aa).

Transmembrane regions (helical) follow at residues 8-28 (FLFA…WLVL), 33-53 (SAWL…LLTL), 63-83 (AAYG…VDGA), and 90-110 (IGGA…PQPT).

It belongs to the UPF0060 family.

Its subcellular location is the cell inner membrane. This is UPF0060 membrane protein RSp1275 from Ralstonia nicotianae (strain ATCC BAA-1114 / GMI1000) (Ralstonia solanacearum).